Consider the following 123-residue polypeptide: Small ribosomal subunit protein uS13 (123 aa).

Residues Arg94–Lys123 form a disordered region.

This sequence belongs to the universal ribosomal protein uS13 family. In terms of assembly, part of the 30S ribosomal subunit. Forms a loose heterodimer with protein S19. Forms two bridges to the 50S subunit in the 70S ribosome.

Its function is as follows. Located at the top of the head of the 30S subunit, it contacts several helices of the 16S rRNA. In the 70S ribosome it contacts the 23S rRNA (bridge B1a) and protein L5 of the 50S subunit (bridge B1b), connecting the 2 subunits; these bridges are implicated in subunit movement. Contacts the tRNAs in the A and P-sites. The protein is Small ribosomal subunit protein uS13 of Oenococcus oeni (strain ATCC BAA-331 / PSU-1).